A 329-amino-acid chain; its full sequence is Ceramide synthase hyl-2 (329 aa).

Asn-22 is a glycosylation site (N-linked (GlcNAc...) asparagine). 7 consecutive transmembrane segments (helical) span residues 41 to 61 (VLTG…IFVP), 95 to 115 (ALYY…ESHL), 134 to 154 (VAWY…GILF), 162 to 182 (FWQM…SWTM), 187 to 207 (VGTL…VGKI), 221 to 241 (FAGV…FWII), and 270 to 290 (FIML…YILF). The region spanning 86–298 (SRMAECAMRA…LFKIAYDTIQ (213 aa)) is the TLC domain.

It belongs to the sphingosine N-acyltransferase family. In terms of tissue distribution, strong expression in the gut, the posterior bulb of the pharynx, the hypoderm, and unidentified cells of the head and the tail.

It is found in the membrane. The catalysed reaction is a very long-chain fatty acyl-CoA + a sphingoid base = an N-(very-long-chain fatty acyl)-sphingoid base + CoA + H(+). It carries out the reaction a fatty acyl-CoA + sphinganine = an N-acylsphinganine + CoA + H(+). The enzyme catalyses docosanoyl-CoA + sphinganine = N-docosanoylsphinganine + CoA + H(+). It catalyses the reaction sphinganine + tetradecanoyl-CoA = N-(tetradecanoyl)-sphinganine + CoA + H(+). The catalysed reaction is eicosanoyl-CoA + sphinganine = N-eicosanoylsphinganine + CoA + H(+). It carries out the reaction 15-methylhexadecasphinganine + a fatty acyl-CoA = an N-acyl-15-methylhexadecasphinganine + CoA + H(+). The protein operates within lipid metabolism; sphingolipid metabolism. Functionally, catalyzes the acylation of sphingoid bases to form ceramides, which are key players in cell signaling events such as tolerances to heat, oxidation, and ultraviolet stress. C.elegans contain specific sphingoid bases, which are unique or different in structure compared to the sphingoid bases found in other animals. Two examples of these distinctive compounds are: 15-methylhexadecasphinganine and 15-methylhexadecasphing-4-enine. Exhibits substrate preference for long and very long fatty acyl-coA chains (C20-23). Required for adaptation of the nematode to anoxia. Anoxia tolerance may require one or more of the ceramide species that are either specifically or preferentially synthesized by HYL-2, and seems to be affected by a pathway that is parallel to that involving daf-2. In Caenorhabditis elegans, this protein is Ceramide synthase hyl-2 (hyl-2).